A 149-amino-acid chain; its full sequence is Large ribosomal subunit protein uL13 (149 aa).

It belongs to the universal ribosomal protein uL13 family. Part of the 50S ribosomal subunit.

Its function is as follows. This protein is one of the early assembly proteins of the 50S ribosomal subunit, although it is not seen to bind rRNA by itself. It is important during the early stages of 50S assembly. The polypeptide is Large ribosomal subunit protein uL13 (Thermotoga maritima (strain ATCC 43589 / DSM 3109 / JCM 10099 / NBRC 100826 / MSB8)).